The primary structure comprises 461 residues: Mannan endo-1,4-beta-mannosidase 4 (461 aa).

Residues W80 and N195 each coordinate substrate. E196 (proton donor) is an active-site residue. Y274 contacts substrate. The active-site Nucleophile is E314. 2 residues coordinate substrate: W357 and D364.

It belongs to the glycosyl hydrolase 5 (cellulase A) family. In terms of tissue distribution, ubiquitous.

It catalyses the reaction Random hydrolysis of (1-&gt;4)-beta-D-mannosidic linkages in mannans, galactomannans and glucomannans.. This is Mannan endo-1,4-beta-mannosidase 4 (MAN4) from Oryza sativa subsp. japonica (Rice).